Consider the following 125-residue polypeptide: Oxytocin-neurophysin 1 (125 aa).

Residues 1–19 (MAGSSLACCLLGLLALTSA) form the signal peptide. An intrachain disulfide couples Cys20 to Cys25. Gly28 carries the glycine amide modification. Disulfide bonds link Cys41–Cys85, Cys44–Cys58, Cys52–Cys75, Cys59–Cys65, Cys92–Cys104, Cys98–Cys116, and Cys105–Cys110.

This sequence belongs to the vasopressin/oxytocin family. In terms of assembly, interacts with oxytocin receptor (Ki=1.5 nM). Interacts with vasopressin V1aR/AVPR1A (Ki=37 nM), V1bR/AVPR1B (Ki=222 nM), and V2R/AVPR2 receptors (Ki=823 nM).

Its function is as follows. Neurophysin 1 specifically binds oxytocin. Functionally, oxytocin causes contraction of the smooth muscle of the uterus and of the mammary gland. Acts by binding to oxytocin receptor (OXTR). This chain is Oxytocin-neurophysin 1 (OXT), found in Ovis aries (Sheep).